The following is a 309-amino-acid chain: Ribosomal protein L11 methyltransferase (309 aa).

S-adenosyl-L-methionine is bound by residues Thr-152, Gly-178, Asp-200, and Asn-242.

The protein belongs to the methyltransferase superfamily. PrmA family.

It is found in the cytoplasm. It catalyses the reaction L-lysyl-[protein] + 3 S-adenosyl-L-methionine = N(6),N(6),N(6)-trimethyl-L-lysyl-[protein] + 3 S-adenosyl-L-homocysteine + 3 H(+). Methylates ribosomal protein L11. The sequence is that of Ribosomal protein L11 methyltransferase from Pelobacter propionicus (strain DSM 2379 / NBRC 103807 / OttBd1).